Reading from the N-terminus, the 249-residue chain is 4-hydroxy-tetrahydrodipicolinate reductase (249 aa).

NAD(+)-binding positions include aspartate 32, 74-76 (GTT), and 99-102 (SANY). The Proton donor/acceptor role is filled by histidine 134. Residue histidine 135 participates in (S)-2,3,4,5-tetrahydrodipicolinate binding. Lysine 138 functions as the Proton donor in the catalytic mechanism. 144–145 (GT) contributes to the (S)-2,3,4,5-tetrahydrodipicolinate binding site.

Belongs to the DapB family.

The protein resides in the cytoplasm. It carries out the reaction (S)-2,3,4,5-tetrahydrodipicolinate + NAD(+) + H2O = (2S,4S)-4-hydroxy-2,3,4,5-tetrahydrodipicolinate + NADH + H(+). It catalyses the reaction (S)-2,3,4,5-tetrahydrodipicolinate + NADP(+) + H2O = (2S,4S)-4-hydroxy-2,3,4,5-tetrahydrodipicolinate + NADPH + H(+). It participates in amino-acid biosynthesis; L-lysine biosynthesis via DAP pathway; (S)-tetrahydrodipicolinate from L-aspartate: step 4/4. Catalyzes the conversion of 4-hydroxy-tetrahydrodipicolinate (HTPA) to tetrahydrodipicolinate. The sequence is that of 4-hydroxy-tetrahydrodipicolinate reductase from Chlorobaculum tepidum (strain ATCC 49652 / DSM 12025 / NBRC 103806 / TLS) (Chlorobium tepidum).